A 383-amino-acid chain; its full sequence is GTP-binding protein 10 (383 aa).

The Obg domain occupies 13 to 148 (GNFIDNLRIY…RIIHLDLKLI (136 aa)). The region spanning 149–344 (SDVGLVGFPN…LIGCIRKTMD (196 aa)) is the OBG-type G domain. GTP-binding positions include 155–162 (GFPNAGKS), 202–206 (DLPGL), and 278–281 (NKMD). The tract at residues 362-383 (LQKETSRTVKRNLKNSPQRTHH) is disordered. The segment covering 369–383 (TVKRNLKNSPQRTHH) has biased composition (basic residues).

The protein belongs to the TRAFAC class OBG-HflX-like GTPase superfamily. OBG GTPase family.

It localises to the nucleus. Its subcellular location is the nucleolus. Functionally, may be involved in the ribosome maturation process. The chain is GTP-binding protein 10 (gtpbp10) from Xenopus tropicalis (Western clawed frog).